A 304-amino-acid chain; its full sequence is Uricase (304 aa).

Ala2 is modified (N-acetylalanine). N6-acetyllysine; alternate occurs at positions 10 and 23. Lys10 and Lys23 each carry N6-succinyllysine; alternate. The active-site Charge relay system is the Lys23. 2 positions are modified to N6-acetyllysine: Lys27 and Lys36. Phosphoserine occurs at positions 39 and 63. The Charge relay system role is filled by Thr68. Urate is bound by residues Thr68 and Asp69. Residues Lys118, Lys122, and Lys164 each carry the N6-acetyllysine modification. Position 170 (Phe170) interacts with urate. N6-acetyllysine is present on residues Lys175 and Lys185. Arg187 is a urate binding site. An N6-acetyllysine; alternate mark is found at Lys221 and Lys228. N6-succinyllysine; alternate occurs at positions 221 and 228. Ser232 is subject to Phosphoserine. Urate-binding residues include Val235, Gln236, and Asn262. His264 (charge relay system) is an active-site residue. Residue Lys278 is modified to N6-acetyllysine. At Tyr289 the chain carries Phosphotyrosine. The Microbody targeting signal motif lies at 302–304; that stretch reads SRL.

It belongs to the uricase family.

The protein resides in the peroxisome. It catalyses the reaction urate + O2 + H2O = 5-hydroxyisourate + H2O2. It participates in purine metabolism; urate degradation; (S)-allantoin from urate: step 1/3. Catalyzes the oxidation of uric acid to 5-hydroxyisourate, which is further processed to form (S)-allantoin. This Macaca fascicularis (Crab-eating macaque) protein is Uricase (UOX).